A 66-amino-acid polypeptide reads, in one-letter code: Beta-toxin Cll1m (66 aa).

The region spanning 1 to 66 (KEGYIVNLST…VWPLPKKTCT (66 aa)) is the LCN-type CS-alpha/beta domain. Cystine bridges form between cysteine 12–cysteine 65, cysteine 16–cysteine 41, cysteine 25–cysteine 46, and cysteine 29–cysteine 48. Threonine 66 is modified (threonine amide).

It belongs to the long (4 C-C) scorpion toxin superfamily. Sodium channel inhibitor family. Beta subfamily. In terms of tissue distribution, expressed by the venom gland.

The protein localises to the secreted. Its function is as follows. Beta toxins bind voltage-independently at site-4 of sodium channels (Nav) and shift the voltage of activation toward more negative potentials thereby affecting sodium channel activation and promoting spontaneous and repetitive firing. The polypeptide is Beta-toxin Cll1m (Centruroides limpidus (Mexican scorpion)).